A 577-amino-acid chain; its full sequence is CTP synthase (577 aa).

Residues 1 to 268 (MDPAFIFITG…GALLCERLRL (268 aa)) are amidoligase domain. A CTP-binding site is contributed by S14. A UTP-binding site is contributed by S14. Residue 15–20 (SLGKGI) coordinates ATP. Residue Y55 participates in L-glutamine binding. D72 is an ATP binding site. Mg(2+) contacts are provided by D72 and E142. CTP-binding positions include 149–151 (DIE), 189–194 (KTKPLQ), and K225. UTP is bound by residues 189 to 194 (KTKPLQ) and K225. One can recognise a Glutamine amidotransferase type-1 domain in the interval 333–575 (TVALVGKYVS…VAAGLERKDS (243 aa)). An L-glutamine-binding site is contributed by G396. C423 functions as the Nucleophile; for glutamine hydrolysis in the catalytic mechanism. L-glutamine contacts are provided by residues 424–427 (LGMQ), E447, and R503. Catalysis depends on residues H548 and E550.

Belongs to the CTP synthase family. Homotetramer.

It catalyses the reaction UTP + L-glutamine + ATP + H2O = CTP + L-glutamate + ADP + phosphate + 2 H(+). The enzyme catalyses L-glutamine + H2O = L-glutamate + NH4(+). It carries out the reaction UTP + NH4(+) + ATP = CTP + ADP + phosphate + 2 H(+). It participates in pyrimidine metabolism; CTP biosynthesis via de novo pathway; CTP from UDP: step 2/2. Its activity is regulated as follows. Allosterically activated by GTP, when glutamine is the substrate; GTP has no effect on the reaction when ammonia is the substrate. The allosteric effector GTP functions by stabilizing the protein conformation that binds the tetrahedral intermediate(s) formed during glutamine hydrolysis. Inhibited by the product CTP, via allosteric rather than competitive inhibition. Functionally, catalyzes the ATP-dependent amination of UTP to CTP with either L-glutamine or ammonia as the source of nitrogen. Regulates intracellular CTP levels through interactions with the four ribonucleotide triphosphates. This chain is CTP synthase, found in Treponema pallidum (strain Nichols).